Consider the following 205-residue polypeptide: Ypt/Rab-type GTPase ypt7 (205 aa).

GTP is bound by residues 17–23 (SGVGKTS), 33–40 (FSASYKAT), Gly66, 125–128 (NKID), and 157–159 (SAK). The short motif at 37–45 (YKATIGADF) is the Effector region element. Residues Cys203 and Cys205 are each lipidated (S-geranylgeranyl cysteine). Residue Cys205 is modified to Cysteine methyl ester.

Belongs to the small GTPase superfamily. Rab family. Interacts with the Rab GDP dissociation inhibitor GDI1.

The protein localises to the vacuole. With respect to regulation, rab activation is generally mediated by a guanine exchange factor (GEF), while inactivation through hydrolysis of bound GTP is catalyzed by a GTPase activating protein (GAP). Its function is as follows. Ypt/Rab-type GTPases are key regulators of membrane trafficking and intracellular vesicular transport. They act as molecular switches that convert between GTP-bound and GDP-bound states, and regulate virtually all steps of membrane traffic from the formation of the transport vesicle at the donor membrane to its fusion at the target membrane. In the GDP-bound state, Ypt proteins are predominantly cytosolic, solubilized through the interaction with a GDP dissociation inhibitor (GDI). In the GTP-bound state, the proteins are membrane bound and interact with specific effector proteins that select cargo, promote vesicle movement, or verify the correct site of fusion. Required for fungal morphogenesis, vacuole fusion, autophagy, stress resistance and pathogenicity. This is Ypt/Rab-type GTPase ypt7 from Pyricularia oryzae (strain 70-15 / ATCC MYA-4617 / FGSC 8958) (Rice blast fungus).